A 375-amino-acid polypeptide reads, in one-letter code: tRNA-specific 2-thiouridylase MnmA (375 aa).

ATP contacts are provided by residues 8–15 (GLSGGVDS) and Met-34. Residues 104–106 (NPD) are interaction with target base in tRNA. The active-site Nucleophile is Cys-109. Cys-109 and Cys-208 are disulfide-bonded. Gly-134 contributes to the ATP binding site. Positions 158-160 (KDQ) are interaction with tRNA. Cys-208 functions as the Cysteine persulfide intermediate in the catalytic mechanism. The interaction with tRNA stretch occupies residues 321–322 (RY).

This sequence belongs to the MnmA/TRMU family.

It is found in the cytoplasm. It catalyses the reaction S-sulfanyl-L-cysteinyl-[protein] + uridine(34) in tRNA + AH2 + ATP = 2-thiouridine(34) in tRNA + L-cysteinyl-[protein] + A + AMP + diphosphate + H(+). In terms of biological role, catalyzes the 2-thiolation of uridine at the wobble position (U34) of tRNA, leading to the formation of s(2)U34. This is tRNA-specific 2-thiouridylase MnmA from Mycoplasma mycoides subsp. mycoides SC (strain CCUG 32753 / NCTC 10114 / PG1).